Reading from the N-terminus, the 136-residue chain is MNSSSKNAVVYWGTGRRKTSVARVRLIPGTGKITINGRPGDHYLNFNPAYLSAVKAPLHTLGLGEAYDVLVNVYGGGLTGQSDAIKQGAARALCELSVDNRKPLKTEGHLSRDPRAKERRKYGLKKARKAPQFSKR.

Positions 103–116 (PLKTEGHLSRDPRA) are enriched in basic and acidic residues. The interval 103-136 (PLKTEGHLSRDPRAKERRKYGLKKARKAPQFSKR) is disordered. Residues 117–136 (KERRKYGLKKARKAPQFSKR) show a composition bias toward basic residues.

It belongs to the universal ribosomal protein uS9 family.

This is Small ribosomal subunit protein uS9 (rpsI) from Prochlorococcus marinus (strain SARG / CCMP1375 / SS120).